The following is a 306-amino-acid chain: Porphobilinogen deaminase (306 aa).

C239 is subject to S-(dipyrrolylmethanemethyl)cysteine.

The protein belongs to the HMBS family. Monomer. The cofactor is dipyrromethane.

The catalysed reaction is 4 porphobilinogen + H2O = hydroxymethylbilane + 4 NH4(+). Its pathway is porphyrin-containing compound metabolism; protoporphyrin-IX biosynthesis; coproporphyrinogen-III from 5-aminolevulinate: step 2/4. Functionally, tetrapolymerization of the monopyrrole PBG into the hydroxymethylbilane pre-uroporphyrinogen in several discrete steps. This is Porphobilinogen deaminase from Helicobacter acinonychis (strain Sheeba).